Reading from the N-terminus, the 400-residue chain is Phosphoglycerate kinase (400 aa).

Substrate is bound by residues 23-25 (DLN), R38, 61-64 (HFGR), R120, and R153. ATP-binding positions include K203, E325, and 355–358 (GGDT).

It belongs to the phosphoglycerate kinase family. Monomer.

Its subcellular location is the cytoplasm. The catalysed reaction is (2R)-3-phosphoglycerate + ATP = (2R)-3-phospho-glyceroyl phosphate + ADP. The protein operates within carbohydrate degradation; glycolysis; pyruvate from D-glyceraldehyde 3-phosphate: step 2/5. This Allorhizobium ampelinum (strain ATCC BAA-846 / DSM 112012 / S4) (Agrobacterium vitis (strain S4)) protein is Phosphoglycerate kinase.